A 1477-amino-acid polypeptide reads, in one-letter code: Neuralized-like protein 4 (1477 aa).

2 disordered regions span residues 1-26 and 168-196; these read MAEL…RKQP and QPPP…RPDK. The NHR 1 domain occupies 1 to 167; that stretch reads MAELHPRTGK…KCTQITVLSC (167 aa). Residues 171–183 show a composition bias toward acidic residues; that stretch reads PEEEEEEDAEEQE. 4 consecutive NHR domains span residues 250 to 417, 450 to 616, 645 to 813, and 841 to 1010; these read ALLF…IVHN, QLLF…IMDE, DLRF…LTGG, and SHRF…TVSS. The segment at 1012–1041 is disordered; the sequence is LLEEPDATKPPSITSESEEEEDPADHGDPH. An NHR 6 domain is found at 1048-1211; the sequence is SLQFLANHGK…QCEQVSIVTG (164 aa).

Post-translationally, ubiquitinated. This ubiquitination leads to proteasomal degradation.

The protein localises to the cytoplasm. It localises to the cytoskeleton. The protein resides in the microtubule organizing center. It is found in the centrosome. Its subcellular location is the centriole. Promotes CCP110 ubiquitination and proteasome-dependent degradation. By counteracting accumulation of CP110, maintains normal centriolar homeostasis and preventing formation of ectopic microtubular organizing centers. This is Neuralized-like protein 4 (neurl4) from Xenopus tropicalis (Western clawed frog).